A 305-amino-acid polypeptide reads, in one-letter code: GMP synthase [glutamine-hydrolyzing] subunit B (305 aa).

One can recognise a GMPS ATP-PPase domain in the interval 2 to 185 (VNVDEFIEEA…LDLEEIISER (184 aa)). 29–35 (SGGVDSS) lines the ATP pocket.

As to quaternary structure, heterodimer composed of a glutamine amidotransferase subunit (A) and a GMP-binding subunit (B).

The catalysed reaction is XMP + L-glutamine + ATP + H2O = GMP + L-glutamate + AMP + diphosphate + 2 H(+). It participates in purine metabolism; GMP biosynthesis; GMP from XMP (L-Gln route): step 1/1. Functionally, catalyzes the synthesis of GMP from XMP. The protein is GMP synthase [glutamine-hydrolyzing] subunit B of Haloarcula marismortui (strain ATCC 43049 / DSM 3752 / JCM 8966 / VKM B-1809) (Halobacterium marismortui).